The primary structure comprises 81 residues: uncharacterized protein (81 aa).

This sequence to Synechocystis PCC 6803 ssr2439.

Functionally, may have a regulatory function. This is an uncharacterized protein from Synechococcus elongatus (strain ATCC 33912 / PCC 7942 / FACHB-805) (Anacystis nidulans R2).